The primary structure comprises 530 residues: Synembryn-like chaperone C3E7.04c (530 aa).

Residues 492–512 (SFIYHCYHSFVGPIHILLLMF) form a helical membrane-spanning segment.

Belongs to the synembryn family.

It localises to the membrane. Chaperone that specifically binds and folds some, but not all, nascent G alpha proteins prior to G protein heterotrimer formation, promoting their stability and activity. Also acts as a guanine nucleotide exchange factor (GEF) for G alpha proteins by stimulating exchange of bound GDP for free GTP. The polypeptide is Synembryn-like chaperone C3E7.04c (Schizosaccharomyces pombe (strain 972 / ATCC 24843) (Fission yeast)).